The sequence spans 667 residues: Probable export ATP-binding/permease protein MacB (667 aa).

The region spanning 22–260 (LRLAGVSRRF…PVEEVQPAAE (239 aa)) is the ABC transporter domain. Position 58-65 (58-65 (GASGSGKS)) interacts with ATP. A run of 4 helical transmembrane segments spans residues 292 to 312 (LLTM…SAIG), 540 to 560 (LTLL…IGVM), 601 to 621 (IGGV…ALFV), and 630 to 650 (LGSI…FGFV).

It belongs to the ABC transporter superfamily. Macrolide exporter (TC 3.A.1.122) family. In terms of assembly, probably part of a tripartite efflux system, which is composed of an inner membrane transporter, a periplasmic membrane fusion protein, and an outer membrane component.

The protein localises to the cell inner membrane. Its function is as follows. Probably part of a tripartite efflux system. The chain is Probable export ATP-binding/permease protein MacB from Pseudomonas entomophila (strain L48).